A 445-amino-acid polypeptide reads, in one-letter code: Xylose isomerase (445 aa).

Residues H107 and D110 contribute to the active site. Positions 238, 274, 277, 302, 313, 315, and 345 each coordinate Mg(2+).

This sequence belongs to the xylose isomerase family. As to quaternary structure, homotetramer. Mg(2+) is required as a cofactor.

The protein localises to the cytoplasm. The enzyme catalyses alpha-D-xylose = alpha-D-xylulofuranose. The sequence is that of Xylose isomerase (xylA) from Bacillus subtilis (strain 168).